A 1093-amino-acid polypeptide reads, in one-letter code: Small G protein signaling modulator 1 (1093 aa).

The RUN domain occupies 36-190 (HEDSSHIISF…EYTKMKTADH (155 aa)). The interval 256–297 (LLYGKNNVLVQPRDDMEAVPGYLSLHQTADVMTLKWTPNQLM) is important for interaction with RAB9A and RAB9B. The segment at 301–350 (VGDLDYEKSVYWDYAVTIRLEEIVYLHCHQQVDSGGTVVLVSQDGIQRPP) is required for interaction with RAP family members. Disordered stretches follow at residues 377–412 (DPPL…KEDD), 645–778 (DSTI…ELAV), and 810–838 (DGAV…EEPE). A compositionally biased stretch (basic residues) spans 385–397 (GKGKVFPKLRKRS). Positions 562–1026 (GVQPEIRRAV…SVWETIWAAK (465 aa)) constitute a Rab-GAP TBC domain. Residues 647 to 676 (TISNESSQSCSSGRQNLRLQSDSSSSTQVF) are compositionally biased toward polar residues. Over residues 687 to 696 (AEGRSEEKHP) the composition is skewed to basic and acidic residues. Residues 702 to 736 (NPANGTCSPDSGHPSSHNFSSGLSEHSEPSLSTED) show a composition bias toward polar residues. Basic and acidic residues-rich tracts occupy residues 766 to 776 (TSRDEAPREEL) and 820 to 829 (EADKPSRADS).

Belongs to the RUTBC family. Interacts with RAB9A (GTP-bound form) and RAB9B. Interacts with RAB3A, RAB4A, RAB5A, RAB8A, RAB11A, RAP1A, RAP1B, RAP2A and RAP2B. No interaction with RAB27A. Expressed only in brain.

The protein resides in the golgi apparatus. The protein localises to the trans-Golgi network. It localises to the cytoplasm. Its subcellular location is the cytoplasmic vesicle membrane. Functionally, interacts with numerous Rab family members, functioning as Rab effector for some, and as GTPase activator for others. Promotes GTP hydrolysis by RAB34 and RAB36. Probably functions as a GTPase effector with RAB9A and RAB9B; does not stimulate GTP hydrolysis with RAB9A and RAB9B. The polypeptide is Small G protein signaling modulator 1 (Sgsm1) (Mus musculus (Mouse)).